Here is a 543-residue protein sequence, read N- to C-terminus: Chaperonin GroEL (543 aa).

Residues 29 to 32 (TVGP), 86 to 90 (DGTTT), Gly413, and Asp504 contribute to the ATP site.

Belongs to the chaperonin (HSP60) family. Forms a cylinder of 14 subunits composed of two heptameric rings stacked back-to-back. Interacts with the co-chaperonin GroES.

The protein resides in the cytoplasm. It catalyses the reaction ATP + H2O + a folded polypeptide = ADP + phosphate + an unfolded polypeptide.. Together with its co-chaperonin GroES, plays an essential role in assisting protein folding. The GroEL-GroES system forms a nano-cage that allows encapsulation of the non-native substrate proteins and provides a physical environment optimized to promote and accelerate protein folding. In Mycoplasma pneumoniae (strain ATCC 29342 / M129 / Subtype 1) (Mycoplasmoides pneumoniae), this protein is Chaperonin GroEL.